We begin with the raw amino-acid sequence, 382 residues long: uncharacterized protein (382 aa).

A run of 12 helical transmembrane segments spans residues 8–28 (VMLL…LNTL), 45–65 (MVSS…GYLI), 75–95 (YLAS…VGFW), 102–122 (FIAG…LMCS), 131–151 (LLAA…LLVS), 157–177 (LLHV…PLLF), 204–224 (LGVN…GLMP), 231–251 (GMAN…GILG), 270–290 (VQVF…AMAP), 291–311 (ALFI…AWAC), 325–345 (ALLL…AMLM), and 349–369 (SDNL…LMLL).

This sequence belongs to the major facilitator superfamily. YcaD (TC 2.A.1.26) family.

It is found in the cell inner membrane. This is an uncharacterized protein from Salmonella newport (strain SL254).